Reading from the N-terminus, the 408-residue chain is Cobalt-precorrin-5B C(1)-methyltransferase (408 aa).

It belongs to the CbiD family.

The catalysed reaction is Co-precorrin-5B + S-adenosyl-L-methionine = Co-precorrin-6A + S-adenosyl-L-homocysteine. It participates in cofactor biosynthesis; adenosylcobalamin biosynthesis; cob(II)yrinate a,c-diamide from sirohydrochlorin (anaerobic route): step 6/10. Catalyzes the methylation of C-1 in cobalt-precorrin-5B to form cobalt-precorrin-6A. This chain is Cobalt-precorrin-5B C(1)-methyltransferase, found in Clostridioides difficile (strain 630) (Peptoclostridium difficile).